Here is a 297-residue protein sequence, read N- to C-terminus: Bifunctional protein FolD (297 aa).

Residues 167-169, serine 192, and isoleucine 233 contribute to the NADP(+) site; that span reads GRS.

The protein belongs to the tetrahydrofolate dehydrogenase/cyclohydrolase family. As to quaternary structure, homodimer.

The enzyme catalyses (6R)-5,10-methylene-5,6,7,8-tetrahydrofolate + NADP(+) = (6R)-5,10-methenyltetrahydrofolate + NADPH. The catalysed reaction is (6R)-5,10-methenyltetrahydrofolate + H2O = (6R)-10-formyltetrahydrofolate + H(+). It functions in the pathway one-carbon metabolism; tetrahydrofolate interconversion. In terms of biological role, catalyzes the oxidation of 5,10-methylenetetrahydrofolate to 5,10-methenyltetrahydrofolate and then the hydrolysis of 5,10-methenyltetrahydrofolate to 10-formyltetrahydrofolate. The protein is Bifunctional protein FolD of Caulobacter vibrioides (strain ATCC 19089 / CIP 103742 / CB 15) (Caulobacter crescentus).